Consider the following 253-residue polypeptide: HTH-type transcriptional regulator YdeO (253 aa).

The HTH araC/xylS-type domain occupies 137–233 (GKVRNIVNMK…GNSPKRVSKE (97 aa)). DNA-binding regions (H-T-H motif) lie at residues 154-175 (KDIC…KQEQ) and 200-223 (VNKI…RKHF).

Induces the expression of gadE and mdtEF. Could also regulate the expression of other genes involved in acid resistance. The polypeptide is HTH-type transcriptional regulator YdeO (ydeO) (Escherichia coli O6:H1 (strain CFT073 / ATCC 700928 / UPEC)).